The following is a 183-amino-acid chain: Acireductone dioxygenase (183 aa).

Positions 99, 101, 105, and 144 each coordinate Fe(2+). Ni(2+) is bound by residues histidine 99, histidine 101, glutamate 105, and histidine 144.

The protein belongs to the acireductone dioxygenase (ARD) family. In terms of assembly, monomer. Fe(2+) is required as a cofactor. The cofactor is Ni(2+).

The enzyme catalyses 1,2-dihydroxy-5-(methylsulfanyl)pent-1-en-3-one + O2 = 3-(methylsulfanyl)propanoate + CO + formate + 2 H(+). It catalyses the reaction 1,2-dihydroxy-5-(methylsulfanyl)pent-1-en-3-one + O2 = 4-methylsulfanyl-2-oxobutanoate + formate + 2 H(+). It participates in amino-acid biosynthesis; L-methionine biosynthesis via salvage pathway; L-methionine from S-methyl-5-thio-alpha-D-ribose 1-phosphate: step 5/6. Functionally, catalyzes 2 different reactions between oxygen and the acireductone 1,2-dihydroxy-3-keto-5-methylthiopentene (DHK-MTPene) depending upon the metal bound in the active site. Fe-containing acireductone dioxygenase (Fe-ARD) produces formate and 2-keto-4-methylthiobutyrate (KMTB), the alpha-ketoacid precursor of methionine in the methionine recycle pathway. Ni-containing acireductone dioxygenase (Ni-ARD) produces methylthiopropionate, carbon monoxide and formate, and does not lie on the methionine recycle pathway. The chain is Acireductone dioxygenase from Microcystis aeruginosa.